Reading from the N-terminus, the 208-residue chain is Pyridoxal 5'-phosphate synthase subunit PdxT (208 aa).

L-glutamine is bound at residue 46–48; that stretch reads GES. Cys78 serves as the catalytic Nucleophile. L-glutamine contacts are provided by residues Arg105 and 156-157; that span reads IR. Catalysis depends on charge relay system residues His192 and Glu194.

The protein belongs to the glutaminase PdxT/SNO family. As to quaternary structure, in the presence of PdxS, forms a dodecamer of heterodimers. Only shows activity in the heterodimer.

The enzyme catalyses aldehydo-D-ribose 5-phosphate + D-glyceraldehyde 3-phosphate + L-glutamine = pyridoxal 5'-phosphate + L-glutamate + phosphate + 3 H2O + H(+). It catalyses the reaction L-glutamine + H2O = L-glutamate + NH4(+). It participates in cofactor biosynthesis; pyridoxal 5'-phosphate biosynthesis. Its function is as follows. Catalyzes the hydrolysis of glutamine to glutamate and ammonia as part of the biosynthesis of pyridoxal 5'-phosphate. The resulting ammonia molecule is channeled to the active site of PdxS. This chain is Pyridoxal 5'-phosphate synthase subunit PdxT, found in Bifidobacterium adolescentis (strain ATCC 15703 / DSM 20083 / NCTC 11814 / E194a).